The primary structure comprises 321 residues: MNKKVNEPIIIEFGDILNLEYIELIKNLNIELIKYILYSRNQCSIPVNQLLSEFKNINNNNNNYNNNNYNNNNKIKIPFKKKKFIESLISLFLEIDEIYFNCLDQDEELPIVVSVLLGSSIFNLKEVYIFYFGSYNDYKNGNNNNNNNNNNNKSNNGFQHDENRNKLREIMMKLVIESPDSFSVLQRPLKTNICIYKKINNITDCLNNIYNNNNNNNNNNNNNNNNNNDSRDQLFIPQQDFQLKIKKSTKITVFNFTNSNINDKFDFKITEISLKSISKNSDHINNENNTNSNNDDNSNNSNNNNENYMWYQFHTSINGVN.

Residues 280 to 306 (NSDHINNENNTNSNNDDNSNNSNNNNE) are disordered. The segment covering 286–306 (NENNTNSNNDDNSNNSNNNNE) has biased composition (low complexity).

This is an uncharacterized protein from Dictyostelium discoideum (Social amoeba).